Consider the following 1846-residue polypeptide: MTYSELYSRYTRVWIPDPDEVWRSAELTKDYKDGDESLQLRLEDDTILDYPIDVQNNQVPFLRNPDILVGENDLTALSHLHEPAVLHNLKVRFLESNHIYTYCGIVLVAINPYEQLPIYGQDVIYAYSGQNMGDMDPHIFAVAEEAYKQMARDEKNQSIIVSGESGAGKTVSAKYAMRYFATVGGSASDTNIEEKVLASSPIMEAIGNAKTTRNDNSSRFGKYIEIGFDKKYHIIGANMRTYLLEKSRVVFQADDERNYHIFYQLCAAASLPEFKELALTCAEDFFYTAHGGNTTIEGVDDAEDFEKTRQALTLLGVRESHQISIFKIIASILHLGSVEIQAERDGDSCSISPQDEHLSNFCRLLGIEHSQMEHWLCHRKLVTTSETYVKTMSLQQVVNARNALAKHIYAQLFSWIVEHINKALQTSLKQHSFIGVLDIYGFETFEINSFEQFCINYANEKLQQQFNSHVFKLEQEEYMKEQIPWTLIDFYDNQPCIDLIEAKLGILDLLDEECKVPKGTDQNWAQKLYERHSNSQHFQKPRMSNTAFIVIHFADKVEYLSDGFLEKNRDTVYEEQINILKASKFPLVADLFRDDEDSVPATNTAKSRSSSKINVRSSRPLMKAPNKEHKKSVGYQFRTSLNLLMETLNATTPHYVRCIKPNDEKLPFHFDPKRAVQQLRACGVLETIRISAAGYPSRWTYHDFFNRYRVLMKKRELANTTDKKNICKSVLESLIKDPDKFQFGRTKIFFRAGQVAYLEKLRADKFREATIMIQKTVRGWLQRVKYRRLRAATLTLQRFCRGYLARRLTEHLRRTRAAIVFQKQYRMLKARRAYCRVRRAAVIIQSYTRGHVCTQKLPPVLTEHKATIIQKYARGWMARRHFQRQRDAAIVIQCAFRRLKARQALKALKIEARSAEHLKRLNVGMENKVVQLQRKIDDQNKEFKTLSEQLSAVTSTHAMEVEKLKKELARYQQNQEADPSLQLQEEVQSLRTELQKAHSERRVLEDAHNRENGELRKRVADLEHENALLKDEKEHLNHQILRQSKAESSQSSVEENLLIKKELEEERSRYQNLVKEYSQLEQRYENLRDEQQTPGHRKNPSNQSSLESDSNYPSISTSEIGDTEDALQQVEEIGIEKAAMDMTVFLKLQKRVRELEQERKKLQVQLEKEQQDSKKVQVEQQNNGLDVDQDADIAYNSLKRQELESENKKLKNDLNERWKAVADQAMQDNSTHSSPDSYSLLLNQLKLANEELEVRKEEVLILRTQIMNADQRRLSGKNMEPNINARTSWPNSEKHVDQEDAIEAYHGVCQTNSQTEDWGYLNEDGELGLAYQGLKQVARLLEAQLQAQNLKHEEEVEHLKAQVEAMKEEMDKQQQTFCQTLLLSPEAQVEFGVQQEISRLTNENLDFKELVEKLEKNEKKLKKQLKIYMKKVQDLEAAQALAQSDRRHHELTRQVTVQRKEKDFQGMLEYHKEDEALLIRNLVTDLKPQMLSGTVPCLPAYILYMCIRHADYTNDDLKVHSLLSSTINGIKKVLKKHNEDFEMTSFWLSNTCRLLHCLKQYSGDEGFMTQNTAKQNEHCLKNFDLTEYRQVLSDLSIQIYQQLIKIAEGLLQPMIVSAMLENESIQGLSGVRPTGYRKRSSSMVDGENSYCLEAIIRQMNFFHTVLCDQGLDPEIILQVFKQLFYMINAVTLNNLLLRKDACSWSTGMQLRYNISQLEEWLRGKNLQQSGAVQTMEPLIQAAQLLQLKKKTQEDAEAICSLCTSLSTQQIVKILNLYTPLNGFEERVTVSFIRTIQAQLQERSDPQQLLLDSKHMFPVLFPFNPSALTMDSIHIPACLNLEFLNEV.

The Myosin N-terminal SH3-like domain occupies 8 to 60 (SRYTRVWIPDPDEVWRSAELTKDYKDGDESLQLRLEDDTILDYPIDVQNNQVP). The tract at residues 21-40 (VWRSAELTKDYKDGDESLQL) is requires for interaction with LIMA1. Residues 69–763 (VGENDLTALS…QVAYLEKLRA (695 aa)) enclose the Myosin motor domain. 163–170 (GESGAGKT) serves as a coordination point for ATP. The segment at 599 to 629 (VPATNTAKSRSSSKINVRSSRPLMKAPNKEH) is disordered. The span at 607–619 (SRSSSKINVRSSR) shows a compositional bias: low complexity. The interval 641 to 663 (LNLLMETLNATTPHYVRCIKPND) is actin-binding. IQ domains follow at residues 767–788 (REAT…KYRR), 789–813 (LRAA…EHLR), 814–837 (RTRA…YCRV), 838–861 (RRAA…PPVL), 862–884 (TEHK…HFQR), and 885–914 (QRDA…EARS). 2 coiled-coil regions span residues 915 to 1272 (AEHL…ADQR) and 1334 to 1450 (LKQV…RHHE). The tract at residues 1088 to 1122 (RDEQQTPGHRKNPSNQSSLESDSNYPSISTSEIGD) is disordered. The segment covering 1100–1120 (PSNQSSLESDSNYPSISTSEI) has biased composition (polar residues). Position 1444 is a phosphoserine (Ser1444). The Dilute domain occupies 1524 to 1801 (SSTINGIKKV…IRTIQAQLQE (278 aa)).

Belongs to the TRAFAC class myosin-kinesin ATPase superfamily. Myosin family. In terms of assembly, component of the CART complex, at least composed of ACTN4, HGS/HRS, MYO5B and TRIM3. Interacts with RAB11FIP2. Interacts with RAB11A and RAB8A. Found in a complex with CFTR and RAB11A. Interacts with NPC1L1. Interacts with LIMA1.

The protein localises to the cytoplasm. In terms of biological role, may be involved in vesicular trafficking via its association with the CART complex. The CART complex is necessary for efficient transferrin receptor recycling but not for EGFR degradation. Required in a complex with RAB11A and RAB11FIP2 for the transport of NPC1L1 to the plasma membrane. Together with RAB11A participates in CFTR trafficking to the plasma membrane and TF (transferrin) recycling in nonpolarized cells. Together with RAB11A and RAB8A participates in epithelial cell polarization. Together with RAB25 regulates transcytosis. Required for proper localization of bile salt export pump ABCB11 at the apical/canalicular plasma membrane of hepatocytes. This chain is Unconventional myosin-Vb (Myo5b), found in Rattus norvegicus (Rat).